The primary structure comprises 342 residues: GTPase Obg (342 aa).

In terms of domain architecture, Obg spans 1-159 (MQFIDRAEIE…RHLRLELKLL (159 aa)). An OBG-type G domain is found at 160 to 328 (AEVGIIGLPN…LLAKVWQQLE (169 aa)). GTP-binding positions include 166-173 (GLPNAGKS), 191-195 (FTTLI), 213-216 (DIPG), 280-283 (NKID), and 309-311 (SAV). Positions 173 and 193 each coordinate Mg(2+).

The protein belongs to the TRAFAC class OBG-HflX-like GTPase superfamily. OBG GTPase family. As to quaternary structure, monomer. It depends on Mg(2+) as a cofactor.

The protein localises to the cytoplasm. An essential GTPase which binds GTP, GDP and possibly (p)ppGpp with moderate affinity, with high nucleotide exchange rates and a fairly low GTP hydrolysis rate. Plays a role in control of the cell cycle, stress response, ribosome biogenesis and in those bacteria that undergo differentiation, in morphogenesis control. The sequence is that of GTPase Obg from Microcystis aeruginosa (strain NIES-843 / IAM M-2473).